An 874-amino-acid chain; its full sequence is Bifunctional uridylyltransferase/uridylyl-removing enzyme (874 aa).

Residues methionine 1–glutamine 336 form a uridylyltransferase region. The interval leucine 337–threonine 695 is uridylyl-removing. An HD domain is found at valine 455–leucine 577. ACT domains follow at residues glutamate 696 to arginine 779 and threonine 802 to aspartate 874.

It belongs to the GlnD family. It depends on Mg(2+) as a cofactor.

The catalysed reaction is [protein-PII]-L-tyrosine + UTP = [protein-PII]-uridylyl-L-tyrosine + diphosphate. It carries out the reaction [protein-PII]-uridylyl-L-tyrosine + H2O = [protein-PII]-L-tyrosine + UMP + H(+). With respect to regulation, uridylyltransferase (UTase) activity is inhibited by glutamine, while glutamine activates uridylyl-removing (UR) activity. Its function is as follows. Modifies, by uridylylation and deuridylylation, the PII regulatory proteins (GlnB and homologs), in response to the nitrogen status of the cell that GlnD senses through the glutamine level. Under low glutamine levels, catalyzes the conversion of the PII proteins and UTP to PII-UMP and PPi, while under higher glutamine levels, GlnD hydrolyzes PII-UMP to PII and UMP (deuridylylation). Thus, controls uridylylation state and activity of the PII proteins, and plays an important role in the regulation of nitrogen assimilation and metabolism. This is Bifunctional uridylyltransferase/uridylyl-removing enzyme from Photobacterium profundum (strain SS9).